The sequence spans 187 residues: MKAYIYDDKPGDQRLPHDTGIDIPEPTLAKLGVVYQRIPIDSEGAWESKIDEFAKERGYKNRDRITVTREGLGEAYEEKIKSFFDEHLHEDEEIRYILAGSGYFDIRGAEGVHEEQWIRIALEAGDLIVLPAGIYHRFTVDSANTITAMRLFQDEPKWTPYSRKADGTDKLGSRDKYLETVRVGVTA.

Fe(2+)-binding residues include H87, H89, E93, and H136. Ni(2+) contacts are provided by H87, H89, E93, and H136.

This sequence belongs to the acireductone dioxygenase (ARD) family. Fe(2+) is required as a cofactor. It depends on Ni(2+) as a cofactor.

Its subcellular location is the cytoplasm. It is found in the nucleus. It carries out the reaction 1,2-dihydroxy-5-(methylsulfanyl)pent-1-en-3-one + O2 = 4-methylsulfanyl-2-oxobutanoate + formate + 2 H(+). The enzyme catalyses 1,2-dihydroxy-5-(methylsulfanyl)pent-1-en-3-one + O2 = 3-(methylsulfanyl)propanoate + CO + formate + 2 H(+). It functions in the pathway amino-acid biosynthesis; L-methionine biosynthesis via salvage pathway; L-methionine from S-methyl-5-thio-alpha-D-ribose 1-phosphate: step 5/6. Functionally, catalyzes 2 different reactions between oxygen and the acireductone 1,2-dihydroxy-3-keto-5-methylthiopentene (DHK-MTPene) depending upon the metal bound in the active site. Fe-containing acireductone dioxygenase (Fe-ARD) produces formate and 2-keto-4-methylthiobutyrate (KMTB), the alpha-ketoacid precursor of methionine in the methionine recycle pathway. Ni-containing acireductone dioxygenase (Ni-ARD) produces methylthiopropionate, carbon monoxide and formate, and does not lie on the methionine recycle pathway. The chain is Acireductone dioxygenase from Cryptococcus neoformans var. neoformans serotype D (strain JEC21 / ATCC MYA-565) (Filobasidiella neoformans).